The primary structure comprises 689 residues: DNA-directed RNA polymerase subunit beta' (689 aa).

Zn(2+) is bound by residues C76, C78, C94, and C97. Residues D496, D498, and D500 each contribute to the Mg(2+) site.

It belongs to the RNA polymerase beta' chain family. RpoC1 subfamily. In plastids the minimal PEP RNA polymerase catalytic core is composed of four subunits: alpha, beta, beta', and beta''. When a (nuclear-encoded) sigma factor is associated with the core the holoenzyme is formed, which can initiate transcription. It depends on Mg(2+) as a cofactor. Zn(2+) is required as a cofactor.

It localises to the plastid. The protein resides in the chloroplast. It carries out the reaction RNA(n) + a ribonucleoside 5'-triphosphate = RNA(n+1) + diphosphate. DNA-dependent RNA polymerase catalyzes the transcription of DNA into RNA using the four ribonucleoside triphosphates as substrates. The polypeptide is DNA-directed RNA polymerase subunit beta' (Illicium oligandrum (Star anise)).